The chain runs to 942 residues: Diacylglycerol kinase theta (942 aa).

The interval 1–59 (MAAAAEPGARAWLGGGSPRPGSPACSPVLGSGGRARPGPGPGPGPERAGVRAPGPAAAP) is disordered. S22 and S26 each carry phosphoserine. Low complexity predominate over residues 45–59 (PERAGVRAPGPAAAP). 3 consecutive Phorbol-ester/DAG-type zinc fingers follow at residues 60–108 (GHSF…RIPC), 121–168 (AHCF…CSDC), and 183–234 (HHHW…APEC). A disordered region spans residues 269 to 295 (EPGEGGDGADGSAAVGPGRETQATPES). Residues 395-494 (AQEVLKIYPG…TRFYVAESRD (100 aa)) enclose the Ras-associating domain. 2 short sequence motifs (LXXLL motif) span residues 555 to 559 (LYMLL) and 574 to 578 (LPDLL). Residues 584 to 721 (PDSCPLLVFV…MDRWTILLDA (138 aa)) enclose the DAGKc domain. The disordered stretch occupies residues 908–942 (PKVHMLRKAKQKPRRAGTTRDARADAAPAPESDPR). Basic residues predominate over residues 911-924 (HMLRKAKQKPRRAG). Low complexity predominate over residues 932-942 (DAAPAPESDPR).

It belongs to the eukaryotic diacylglycerol kinase family. In terms of assembly, interacts with RHOA (constitutively activated, GTP-bound); the interaction inhibits DGKQ. Interacts with PRKCE. Interacts with PRKCH. Interacts with PLCB1. Interacts with NR5A1; the interaction requires both LXXLL motifs in DGKQ and is required for full phosphatidic acid-mediated activation of NR5A1. Post-translationally, phosphorylated by PRKCE and PRKCH in vitro.

It is found in the cytoplasm. Its subcellular location is the cytosol. It localises to the cell membrane. The protein localises to the synapse. The protein resides in the cytoskeleton. It is found in the nucleus. Its subcellular location is the nucleus speckle. It localises to the nucleus matrix. The catalysed reaction is a 1,2-diacyl-sn-glycerol + ATP = a 1,2-diacyl-sn-glycero-3-phosphate + ADP + H(+). It carries out the reaction a 1-O-alkyl-sn-glycerol + ATP = a 1-O-alkyl-sn-glycero-3-phosphate + ADP + H(+). It catalyses the reaction 1-O-alkyl-2-acyl-sn-glycerol + ATP = 1-O-alkyl-2-acyl-sn-glycero-3-phosphate + ADP + H(+). The enzyme catalyses 1,2-di-(9Z-octadecenoyl)-sn-glycerol + ATP = 1,2-di-(9Z-octadecenoyl)-sn-glycero-3-phosphate + ADP + H(+). The catalysed reaction is 1-O-hexadecyl-sn-glycerol + ATP = 1-O-hexadecyl-sn-glycero-3-phosphate + ADP + H(+). It carries out the reaction 1-O-hexadecyl-2-acetyl-sn-glycerol + ATP = 1-O-hexadecyl-2-acetyl-sn-glycero-3-phosphate + ADP + H(+). It catalyses the reaction 1-octadecanoyl-2-(5Z,8Z,11Z,14Z-eicosatetraenoyl)-sn-glycerol + ATP = 1-octadecanoyl-2-(5Z,8Z,11Z,14Z-eicosatetraenoyl)-sn-glycero-3-phosphate + ADP + H(+). Its pathway is lipid metabolism; glycerolipid metabolism. Its activity is regulated as follows. Activated by phosphatidylserine. In terms of biological role, diacylglycerol kinase that converts diacylglycerol/DAG into phosphatidic acid/phosphatidate/PA and regulates the respective levels of these two bioactive lipids. Thereby, acts as a central switch between the signaling pathways activated by these second messengers with different cellular targets and opposite effects in numerous biological processes. Within the adrenocorticotropic hormone signaling pathway, produces phosphatidic acid which in turn activates NR5A1 and subsequent steroidogenic gene transcription. Also functions downstream of the nerve growth factor signaling pathway being specifically activated in the nucleus by the growth factor. Through its diacylglycerol activity also regulates synaptic vesicle endocytosis. The protein is Diacylglycerol kinase theta of Homo sapiens (Human).